Here is a 430-residue protein sequence, read N- to C-terminus: Tyrosine--tRNA ligase (430 aa).

Position 32 (Tyr-32) interacts with L-tyrosine. The 'HIGH' region signature appears at 37–46 (PTADSLHIGH). Tyr-172 and Gln-176 together coordinate L-tyrosine. Positions 232–236 (KFGKT) match the 'KMSKS' region motif. An ATP-binding site is contributed by Lys-235. The S4 RNA-binding domain maps to 362-429 (IKAVDLCTEK…GKKNYYLLIA (68 aa)).

This sequence belongs to the class-I aminoacyl-tRNA synthetase family. TyrS type 1 subfamily. In terms of assembly, homodimer.

The protein resides in the cytoplasm. The enzyme catalyses tRNA(Tyr) + L-tyrosine + ATP = L-tyrosyl-tRNA(Tyr) + AMP + diphosphate + H(+). Functionally, catalyzes the attachment of tyrosine to tRNA(Tyr) in a two-step reaction: tyrosine is first activated by ATP to form Tyr-AMP and then transferred to the acceptor end of tRNA(Tyr). This Parabacteroides distasonis (strain ATCC 8503 / DSM 20701 / CIP 104284 / JCM 5825 / NCTC 11152) protein is Tyrosine--tRNA ligase.